Here is a 330-residue protein sequence, read N- to C-terminus: Phenylalanine--tRNA ligase alpha subunit (330 aa).

Glu-246 contributes to the Mg(2+) binding site.

This sequence belongs to the class-II aminoacyl-tRNA synthetase family. Phe-tRNA synthetase alpha subunit type 1 subfamily. As to quaternary structure, tetramer of two alpha and two beta subunits. The cofactor is Mg(2+).

It is found in the cytoplasm. It catalyses the reaction tRNA(Phe) + L-phenylalanine + ATP = L-phenylalanyl-tRNA(Phe) + AMP + diphosphate + H(+). The chain is Phenylalanine--tRNA ligase alpha subunit from Wolinella succinogenes (strain ATCC 29543 / DSM 1740 / CCUG 13145 / JCM 31913 / LMG 7466 / NCTC 11488 / FDC 602W) (Vibrio succinogenes).